Consider the following 896-residue polypeptide: Translation initiation factor IF-2 (896 aa).

The span at 117–174 (AEAEAKAKAEAEAKAKVDAEAKVKAKAEAEAKAKAKVQTEKPAAETAEDKAAKAEEAK) shows a compositional bias: basic and acidic residues. The segment at 117-303 (AEAEAKAKAE…TRSVAPESMD (187 aa)) is disordered. Residues 175–195 (LLAAQDAVAKAKANEEASAAA) show a composition bias toward low complexity. The segment covering 196–227 (DEARRLAEENEKRWAEEEKARKEAEKSVDHHV) has biased composition (basic and acidic residues). Residues 254 to 268 (PSANAGNNANANAGA) are compositionally biased toward low complexity. One can recognise a tr-type G domain in the interval 396–563 (PRAPVVTIMG…GILLEAEVLE (168 aa)). A G1 region spans residues 405–412 (GHVDHGKT). 405 to 412 (GHVDHGKT) lines the GTP pocket. Residues 430 to 434 (GITQH) are G2. Residues 451–454 (DTPG) form a G3 region. GTP-binding positions include 451-455 (DTPGH) and 505-508 (NKID). Residues 505 to 508 (NKID) form a G4 region. Residues 541-543 (SAK) form a G5 region.

It belongs to the TRAFAC class translation factor GTPase superfamily. Classic translation factor GTPase family. IF-2 subfamily.

The protein localises to the cytoplasm. Its function is as follows. One of the essential components for the initiation of protein synthesis. Protects formylmethionyl-tRNA from spontaneous hydrolysis and promotes its binding to the 30S ribosomal subunits. Also involved in the hydrolysis of GTP during the formation of the 70S ribosomal complex. The protein is Translation initiation factor IF-2 of Shewanella pealeana (strain ATCC 700345 / ANG-SQ1).